The primary structure comprises 380 residues: Homoserine O-acetyltransferase (380 aa).

The AB hydrolase-1 domain occupies 59-363 (NVVMVLHALT…IYGHDGFLVE (305 aa)). Catalysis depends on serine 164, which acts as the Nucleophile. Arginine 234 contributes to the substrate binding site. Active-site residues include aspartate 327 and histidine 357. Residue aspartate 358 participates in substrate binding.

The protein belongs to the AB hydrolase superfamily. MetX family. In terms of assembly, homodimer.

It localises to the cytoplasm. The enzyme catalyses L-homoserine + acetyl-CoA = O-acetyl-L-homoserine + CoA. Its pathway is amino-acid biosynthesis; L-methionine biosynthesis via de novo pathway; O-acetyl-L-homoserine from L-homoserine: step 1/1. Functionally, transfers an acetyl group from acetyl-CoA to L-homoserine, forming acetyl-L-homoserine. In Mycolicibacterium smegmatis (strain ATCC 700084 / mc(2)155) (Mycobacterium smegmatis), this protein is Homoserine O-acetyltransferase.